Here is a 303-residue protein sequence, read N- to C-terminus: Nucleotide-binding protein USA300HOU_0794 (303 aa).

ATP is bound at residue 18–25 (GLSGAGKS). 69-72 (DLRG) contacts GTP.

Belongs to the RapZ-like family.

Its function is as follows. Displays ATPase and GTPase activities. The sequence is that of Nucleotide-binding protein USA300HOU_0794 from Staphylococcus aureus (strain USA300 / TCH1516).